The primary structure comprises 329 residues: Fructose-1,6-bisphosphatase class 1 (329 aa).

Mg(2+) is bound by residues Glu-84, Asp-103, Leu-105, and Asp-106. Substrate is bound by residues 106 to 109 (DGSS), Asn-196, and Lys-262. Glu-268 is a binding site for Mg(2+).

Belongs to the FBPase class 1 family. Homotetramer. Requires Mg(2+) as cofactor.

Its subcellular location is the cytoplasm. The catalysed reaction is beta-D-fructose 1,6-bisphosphate + H2O = beta-D-fructose 6-phosphate + phosphate. It functions in the pathway carbohydrate biosynthesis; gluconeogenesis. The chain is Fructose-1,6-bisphosphatase class 1 from Shewanella sediminis (strain HAW-EB3).